We begin with the raw amino-acid sequence, 308 residues long: Porphobilinogen deaminase (308 aa).

C241 bears the S-(dipyrrolylmethanemethyl)cysteine mark.

It belongs to the HMBS family. Monomer. Dipyrromethane serves as cofactor.

It carries out the reaction 4 porphobilinogen + H2O = hydroxymethylbilane + 4 NH4(+). Its pathway is porphyrin-containing compound metabolism; protoporphyrin-IX biosynthesis; coproporphyrinogen-III from 5-aminolevulinate: step 2/4. Functionally, tetrapolymerization of the monopyrrole PBG into the hydroxymethylbilane pre-uroporphyrinogen in several discrete steps. This is Porphobilinogen deaminase from Staphylococcus epidermidis (strain ATCC 35984 / DSM 28319 / BCRC 17069 / CCUG 31568 / BM 3577 / RP62A).